The sequence spans 580 residues: Phosphatase and actin regulator 1 (580 aa).

2 positions are modified to phosphoserine: serine 67 and serine 78. At threonine 104 the chain carries Phosphothreonine. Residues 108–129 carry the Nuclear localization signal motif; it reads RRRSKFANLGRIFKPWKWRKKK. One copy of the RPEL 1 repeat lies at 138 to 163; it reads AALERKISMRQSREELIKRGVLKEIY. Positions 331-351 are disordered; that stretch reads EQRVPCSTSYHSSGLHSSDGV. The span at 337–348 shows a compositional bias: low complexity; sequence STSYHSSGLHSS. 3 RPEL repeats span residues 422-447, 460-485, and 498-523; these read DSLA…PRQT, TKLT…KPRN, and RRLT…IRFS. The disordered stretch occupies residues 462–494; that stretch reads LTRRLSQRPTAEELEQRNILKPRNEQEEQEEKR. Serine 467 carries the post-translational modification Phosphoserine. Residues 471–494 are compositionally biased toward basic and acidic residues; that stretch reads TAEELEQRNILKPRNEQEEQEEKR. Serine 505 is subject to Phosphoserine.

Belongs to the phosphatase and actin regulator family. Interacts (via RPEL repeats) with ACTA1 and PPP1CA; ACTA1 and PPP1CA compete for the same binding site. In terms of tissue distribution, selectively expressed in brain. High levels are found in the olfactory tubercle, nucleus accumbens core and shell, caudate-putamen, cerebral cortex, hippocampus and piriform cortex. Moderate to high levels in the olfactory bulb, arcuate and ventromedial hypothalamus, subthalamic nucleus, amygdala, lateral septum, habenula and thalamus. Low expression, if any, in substantia nigra pars compacta/pars reticula and globus pallidus (at protein level).

The protein localises to the cytoplasm. Its subcellular location is the synapse. The protein resides in the nucleus. In terms of biological role, binds actin monomers (G actin) and plays a role in multiple processes including the regulation of actin cytoskeleton dynamics, actin stress fibers formation, cell motility and survival, formation of tubules by endothelial cells, and regulation of PPP1CA activity. Involved in the regulation of cortical neuron migration and dendrite arborization. This is Phosphatase and actin regulator 1 (Phactr1) from Rattus norvegicus (Rat).